The following is a 633-amino-acid chain: GTPase-GDP dissociation stimulator BEM4 (633 aa).

As to quaternary structure, interacts with CDC42; the interaction is direct. Interacts with RHO1; the interaction is direct. Interacts with RHO2. Interacts with RHO4. Interacts with CDC11.

The protein resides in the nucleus. The protein localises to the cytoplasm. In terms of biological role, probably acts as a GEF (guanine nucleotide exchange factor) for the Rho family of small GTP-binding proteins (G proteins) that stimulates the dissociation of GDP to enable subsequent binding of GTP. May also chaperone the processing and/or trafficking of small GTPases independently of GEF activity. Involved in the control of polarized cell growth via CDC42-mediated signaling. Involved in the control of cell-wall organization via RHO1-mediated signaling. May also function via RHO2 and RHO4. The sequence is that of GTPase-GDP dissociation stimulator BEM4 from Saccharomyces cerevisiae (strain ATCC 204508 / S288c) (Baker's yeast).